A 131-amino-acid polypeptide reads, in one-letter code: Small ribosomal subunit protein uS8 (131 aa).

This sequence belongs to the universal ribosomal protein uS8 family. In terms of assembly, part of the 30S ribosomal subunit. Contacts proteins S5 and S12.

One of the primary rRNA binding proteins, it binds directly to 16S rRNA central domain where it helps coordinate assembly of the platform of the 30S subunit. This chain is Small ribosomal subunit protein uS8, found in Chromobacterium violaceum (strain ATCC 12472 / DSM 30191 / JCM 1249 / CCUG 213 / NBRC 12614 / NCIMB 9131 / NCTC 9757 / MK).